The following is a 442-amino-acid chain: MYLPQEIIRKKRDGEVLTADEINFFIQGVANNTVSEGQIAAFAMTIFFNEMTMDERIALTCAMRDSGMVIDWSHMNFGGPIVDKHSTGGVGDVTSLMLGPMVAACGGFVPMISGRGLGHTGGTLDKLEAIPGYNITPTNEVFGQVTKDAGVAIIGQTGDLAPADKRVYATRDITATVDNISLITASILSKKLAAGLESLVMDVKVGSGAFMPTYEASEELAKSIVAVANGAGTKTTAILTDMNQVLASSAGNAVEVREAVRFLTGEYRNPRLLEVTMASCAEMLVLAKLAENTDDARAKLMEVLDNGKAAACFGKMVAGLGGPADFVENYDNYLEKAEIIKPVYATETGIVSAMDTRAIGMAVVSMGGGRRVATDEIDYAVGFDNFIRLGEVADSDKPLAVIHARSEGQWEEAAKALRSAIKVGGEYTPTPEVYRQIRAEDI.

The protein belongs to the thymidine/pyrimidine-nucleoside phosphorylase family. As to quaternary structure, homodimer.

The enzyme catalyses thymidine + phosphate = 2-deoxy-alpha-D-ribose 1-phosphate + thymine. It participates in pyrimidine metabolism; dTMP biosynthesis via salvage pathway; dTMP from thymine: step 1/2. The enzymes which catalyze the reversible phosphorolysis of pyrimidine nucleosides are involved in the degradation of these compounds and in their utilization as carbon and energy sources, or in the rescue of pyrimidine bases for nucleotide synthesis. This Vibrio parahaemolyticus serotype O3:K6 (strain RIMD 2210633) protein is Thymidine phosphorylase.